A 417-amino-acid chain; its full sequence is Serine hydroxymethyltransferase (417 aa).

Lysine 54 is subject to N6-acetyllysine. Residues leucine 121 and 125–127 contribute to the (6S)-5,6,7,8-tetrahydrofolate site; that span reads GHL. Lysine 229 is modified (N6-(pyridoxal phosphate)lysine). Residues lysine 250, lysine 285, and lysine 354 each carry the N6-acetyllysine modification. Position 355 to 357 (355 to 357) interacts with (6S)-5,6,7,8-tetrahydrofolate; that stretch reads SPF. An N6-acetyllysine modification is found at lysine 375.

It belongs to the SHMT family. Homodimer. It depends on pyridoxal 5'-phosphate as a cofactor.

It localises to the cytoplasm. It catalyses the reaction (6R)-5,10-methylene-5,6,7,8-tetrahydrofolate + glycine + H2O = (6S)-5,6,7,8-tetrahydrofolate + L-serine. Its pathway is one-carbon metabolism; tetrahydrofolate interconversion. It participates in amino-acid biosynthesis; glycine biosynthesis; glycine from L-serine: step 1/1. Its function is as follows. Catalyzes the reversible interconversion of serine and glycine with tetrahydrofolate (THF) serving as the one-carbon carrier. This reaction serves as the major source of one-carbon groups required for the biosynthesis of purines, thymidylate, methionine, and other important biomolecules. Also exhibits THF-independent aldolase activity toward beta-hydroxyamino acids, producing glycine and aldehydes, via a retro-aldol mechanism. The chain is Serine hydroxymethyltransferase from Escherichia coli O1:K1 / APEC.